We begin with the raw amino-acid sequence, 485 residues long: Proline--tRNA ligase (485 aa).

The protein belongs to the class-II aminoacyl-tRNA synthetase family. ProS type 3 subfamily. As to quaternary structure, homodimer.

It is found in the cytoplasm. It catalyses the reaction tRNA(Pro) + L-proline + ATP = L-prolyl-tRNA(Pro) + AMP + diphosphate. Its function is as follows. Catalyzes the attachment of proline to tRNA(Pro) in a two-step reaction: proline is first activated by ATP to form Pro-AMP and then transferred to the acceptor end of tRNA(Pro). The protein is Proline--tRNA ligase of Methanopyrus kandleri (strain AV19 / DSM 6324 / JCM 9639 / NBRC 100938).